A 148-amino-acid chain; its full sequence is MPTFKLVLSDPISGKAMQFEIKDPLAQRFVGLKIGDEIDGVILKDFISLPKGAKIKITGGSGIEGAPMVPGVPGPVKRYILAEGPPGYRPKKRGMRRKKLVRGDTISDSIVQINAVIVYPKDYSGPPAIPIGAKELEKLTKKEEAAAQ.

This sequence belongs to the eukaryotic ribosomal protein eS6 family.

The protein is Small ribosomal subunit protein eS6 of Pyrobaculum arsenaticum (strain DSM 13514 / JCM 11321 / PZ6).